The primary structure comprises 865 residues: High affinity cAMP-specific and IBMX-insensitive 3',5'-cyclic phosphodiesterase 8B (865 aa).

2 disordered regions span residues 17–40 and 52–92; these read CRDSDESNSPRQTSSVSQGPTAPL and AMPP…TCRG. Positions 23–36 are enriched in polar residues; it reads SNSPRQTSSVSQGP. Residues 75–90 are compositionally biased toward low complexity; the sequence is GSGSSTGSSGPATTTC. In terms of domain architecture, PAS spans 247–318; it reads ACNSVFTALD…DTINTCIKKG (72 aa). The tract at residues 373–415 is disordered; it reads IHRDSGDNSQTEPHSFRHKSRRKESIDVKSISSRGSDAPSLQN. Positions 402 to 415 are enriched in polar residues; the sequence is SISSRGSDAPSLQN. Position 497 is a phosphoserine (serine 497). The PDEase domain maps to 519-855; that stretch reads TINDVPPSIA…KHWKTLDDLK (337 aa). The Proton donor role is filled by histidine 595. Residues histidine 599, histidine 635, and aspartate 636 each coordinate a divalent metal cation. Phosphoserine is present on residues serine 731 and serine 734. Aspartate 761 is a binding site for a divalent metal cation.

This sequence belongs to the cyclic nucleotide phosphodiesterase family. PDE8 subfamily. The cofactor is a divalent metal cation. As to expression, widely expressed.

It carries out the reaction 3',5'-cyclic AMP + H2O = AMP + H(+). It functions in the pathway purine metabolism; 3',5'-cyclic AMP degradation; AMP from 3',5'-cyclic AMP: step 1/1. Functionally, hydrolyzes the second messenger cAMP, which is a key regulator of many important physiological processes. May be involved in specific signaling in the thyroid gland. In Mus musculus (Mouse), this protein is High affinity cAMP-specific and IBMX-insensitive 3',5'-cyclic phosphodiesterase 8B (Pde8b).